The sequence spans 1108 residues: Isoleucine--tRNA ligase (1108 aa).

The 'HIGH' region motif lies at 53-63 (PFANGLPHYGH). Positions 654–658 (KLSKR) match the 'KMSKS' region motif. Lys657 contacts ATP.

This sequence belongs to the class-I aminoacyl-tRNA synthetase family. IleS type 2 subfamily. In terms of assembly, monomer. Requires Zn(2+) as cofactor.

The protein resides in the cytoplasm. It catalyses the reaction tRNA(Ile) + L-isoleucine + ATP = L-isoleucyl-tRNA(Ile) + AMP + diphosphate. Catalyzes the attachment of isoleucine to tRNA(Ile). As IleRS can inadvertently accommodate and process structurally similar amino acids such as valine, to avoid such errors it has two additional distinct tRNA(Ile)-dependent editing activities. One activity is designated as 'pretransfer' editing and involves the hydrolysis of activated Val-AMP. The other activity is designated 'posttransfer' editing and involves deacylation of mischarged Val-tRNA(Ile). The chain is Isoleucine--tRNA ligase from Rickettsia bellii (strain RML369-C).